The sequence spans 197 residues: UPF0314 protein NGR_c32320 (197 aa).

Helical transmembrane passes span tryptophan 16–methionine 36, tryptophan 66–leucine 86, and leucine 152–isoleucine 172.

Belongs to the UPF0314 family.

The protein resides in the cell membrane. The sequence is that of UPF0314 protein NGR_c32320 from Sinorhizobium fredii (strain NBRC 101917 / NGR234).